We begin with the raw amino-acid sequence, 411 residues long: Tubulin beta-2 chain (411 aa).

Residues Glu37, Ser106, Gly110, Thr111, Gly112, Asn172, and Asn194 each contribute to the GTP site. Glu37 serves as a coordination point for Mg(2+). The disordered stretch occupies residues 392 to 411 (QYQDATAEPEGXYEEDYDEA). Positions 402-411 (GXYEEDYDEA) are enriched in acidic residues.

Belongs to the tubulin family. As to quaternary structure, dimer of alpha and beta chains. A typical microtubule is a hollow water-filled tube with an outer diameter of 25 nm and an inner diameter of 15 nM. Alpha-beta heterodimers associate head-to-tail to form protofilaments running lengthwise along the microtubule wall with the beta-tubulin subunit facing the microtubule plus end conferring a structural polarity. Microtubules usually have 13 protofilaments but different protofilament numbers can be found in some organisms and specialized cells. It depends on Mg(2+) as a cofactor.

It localises to the cytoplasm. The protein resides in the cytoskeleton. In terms of biological role, tubulin is the major constituent of microtubules, a cylinder consisting of laterally associated linear protofilaments composed of alpha- and beta-tubulin heterodimers. Microtubules grow by the addition of GTP-tubulin dimers to the microtubule end, where a stabilizing cap forms. Below the cap, tubulin dimers are in GDP-bound state, owing to GTPase activity of alpha-tubulin. The polypeptide is Tubulin beta-2 chain (TUBB2) (Anemia phyllitidis (Fern)).